We begin with the raw amino-acid sequence, 191 residues long: UPF0312 protein Sden_2128 (191 aa).

The signal sequence occupies residues M1–A22.

It belongs to the UPF0312 family. Type 1 subfamily.

It is found in the periplasm. In Shewanella denitrificans (strain OS217 / ATCC BAA-1090 / DSM 15013), this protein is UPF0312 protein Sden_2128.